The following is a 271-amino-acid chain: Probable ribosomal RNA small subunit methyltransferase A (271 aa).

S-adenosyl-L-methionine contacts are provided by Leu-12, Gly-37, Glu-58, Asp-83, and Asn-100.

This sequence belongs to the class I-like SAM-binding methyltransferase superfamily. rRNA adenine N(6)-methyltransferase family. RsmA subfamily.

The protein resides in the cytoplasm. Its function is as follows. Specifically dimethylates two adjacent adenosines in the loop of a conserved hairpin near the 3'-end of 16S rRNA in the 30S particle. May play a critical role in biogenesis of 30S subunits. The sequence is that of Probable ribosomal RNA small subunit methyltransferase A from Methanococcus aeolicus (strain ATCC BAA-1280 / DSM 17508 / OCM 812 / Nankai-3).